We begin with the raw amino-acid sequence, 197 residues long: ATP-dependent Clp protease proteolytic subunit (197 aa).

Serine 98 serves as the catalytic Nucleophile. The active site involves histidine 123.

It belongs to the peptidase S14 family. In terms of assembly, fourteen ClpP subunits assemble into 2 heptameric rings which stack back to back to give a disk-like structure with a central cavity, resembling the structure of eukaryotic proteasomes. Forms large heterooligomeric complexes consisting of an ATPase component (ClpX, ClpC or ClpE) and a proteolytic component (ClpP).

It localises to the cytoplasm. It catalyses the reaction Hydrolysis of proteins to small peptides in the presence of ATP and magnesium. alpha-casein is the usual test substrate. In the absence of ATP, only oligopeptides shorter than five residues are hydrolyzed (such as succinyl-Leu-Tyr-|-NHMec, and Leu-Tyr-Leu-|-Tyr-Trp, in which cleavage of the -Tyr-|-Leu- and -Tyr-|-Trp bonds also occurs).. Low intrinsic peptidase activity is stimulated by ATP-binding subunits ClpC, ClpE and ClpX. Activity is disregulated by acyldepsipeptides (ADEP) antibiotics, which negate the need for ATP-binding subunits for activation and which makes it into an unregulated protease. Each ClpP subunit binds 1 ADEP molecule, which prevents binding of ClpX. ADEP binding causes conformational shifts that open the gated pore of the ring. Protease activity is inhibited by diisopropylfluoro-phosphate. Protease activity is inhibited by bortezomib, an oncology drug originally designed to work on the human proteasome. In terms of biological role, cleaves peptides in various proteins in a process that requires ATP hydrolysis. Has a limited peptidase activity in the absence of ATP-binding subunits ClpC, ClpE or ClpX. Has a chymotrypsin-like activity. Plays a major role in the degradation of misfolded proteins. ClpXP is involved in the complete degradation of the site-2 clipped anti-sigma-W factor RsiW. This results in the release of SigW and the transcriptional activation of genes under the control of the sigma-W factor. Probably the major protease that degrades proteins tagged by trans-translation. This chain is ATP-dependent Clp protease proteolytic subunit, found in Bacillus subtilis (strain 168).